Consider the following 370-residue polypeptide: Adaptive-response sensory kinase SasA (370 aa).

Positions 152-365 (MVAHELRTPL…CFYLTVPVWQ (214 aa)) constitute a Histidine kinase domain. Position 155 is a phosphohistidine; by autocatalysis (histidine 155).

In terms of assembly, homooligomerizes. Interacts with KaiC. Participates in the KaiBC complex, whose core is composed of a KaiC homohexamer and 6 KaiB.

The enzyme catalyses ATP + protein L-histidine = ADP + protein N-phospho-L-histidine.. Its function is as follows. Member of the two-component regulatory system SasA/RpaA involved in genome-wide circadian gene expression. One of several clock output pathways. Participates in the Kai clock protein complex, the main circadian regulator in cyanobacteria, via its interaction with KaiC. KaiC enhances the autophosphorylation activity of SasA, which then transfers its phosphate group to RpaA to activate it. In addition to its output function, recruits fold-shifted KaiB (KaiB(fs)) to KaiC to cooperatively form the KaiB(6):KaiC(6) complex (independent of SasA kinase activity). Required for robustness of the circadian rhythm of gene expression and is involved in clock output, also required for adaptation to light/dark cycles. This Prochlorococcus marinus (strain MIT 9313) protein is Adaptive-response sensory kinase SasA.